Here is a 93-residue protein sequence, read N- to C-terminus: Pyrimidine/purine nucleoside phosphorylase (93 aa).

It belongs to the nucleoside phosphorylase PpnP family.

The enzyme catalyses a purine D-ribonucleoside + phosphate = a purine nucleobase + alpha-D-ribose 1-phosphate. It catalyses the reaction adenosine + phosphate = alpha-D-ribose 1-phosphate + adenine. The catalysed reaction is cytidine + phosphate = cytosine + alpha-D-ribose 1-phosphate. It carries out the reaction guanosine + phosphate = alpha-D-ribose 1-phosphate + guanine. The enzyme catalyses inosine + phosphate = alpha-D-ribose 1-phosphate + hypoxanthine. It catalyses the reaction thymidine + phosphate = 2-deoxy-alpha-D-ribose 1-phosphate + thymine. The catalysed reaction is uridine + phosphate = alpha-D-ribose 1-phosphate + uracil. It carries out the reaction xanthosine + phosphate = alpha-D-ribose 1-phosphate + xanthine. In terms of biological role, catalyzes the phosphorolysis of diverse nucleosides, yielding D-ribose 1-phosphate and the respective free bases. Can use uridine, adenosine, guanosine, cytidine, thymidine, inosine and xanthosine as substrates. Also catalyzes the reverse reactions. This Cellvibrio japonicus (strain Ueda107) (Pseudomonas fluorescens subsp. cellulosa) protein is Pyrimidine/purine nucleoside phosphorylase.